The primary structure comprises 340 residues: Adenosine kinase (340 aa).

The active site involves D293.

The protein belongs to the carbohydrate kinase PfkB family. Monomer. It depends on Mg(2+) as a cofactor.

The enzyme catalyses adenosine + ATP = AMP + ADP + H(+). The protein operates within purine metabolism; AMP biosynthesis via salvage pathway; AMP from adenosine: step 1/1. Functionally, ATP dependent phosphorylation of adenosine and other related nucleoside analogs to monophosphate derivatives. In Dictyostelium discoideum (Social amoeba), this protein is Adenosine kinase (adk).